A 462-amino-acid polypeptide reads, in one-letter code: Transactivator/viroplasmin protein (462 aa).

Positions 433–462 (NVSNDEKRSTKSVSSDEINLSAENDGYQHS) are disordered. A compositionally biased stretch (polar residues) spans 443 to 462 (KSVSSDEINLSAENDGYQHS).

Belongs to the caulimoviridae viroplasmin family.

Its subcellular location is the host cytoplasm. Functionally, enhances the translation of downstream ORFs on polycistronic mRNAs derived from soybean chlorotic mottle virus. The protein is Transactivator/viroplasmin protein of Soybean chlorotic mottle virus.